We begin with the raw amino-acid sequence, 185 residues long: Large ribosomal subunit protein uL5 (185 aa).

The protein belongs to the universal ribosomal protein uL5 family. As to quaternary structure, part of the 50S ribosomal subunit; part of the 5S rRNA/L5/L18/L25 subcomplex. Contacts the 5S rRNA and the P site tRNA. Forms a bridge to the 30S subunit in the 70S ribosome.

Its function is as follows. This is one of the proteins that bind and probably mediate the attachment of the 5S RNA into the large ribosomal subunit, where it forms part of the central protuberance. In the 70S ribosome it contacts protein S13 of the 30S subunit (bridge B1b), connecting the 2 subunits; this bridge is implicated in subunit movement. Contacts the P site tRNA; the 5S rRNA and some of its associated proteins might help stabilize positioning of ribosome-bound tRNAs. This is Large ribosomal subunit protein uL5 from Caulobacter vibrioides (strain NA1000 / CB15N) (Caulobacter crescentus).